The primary structure comprises 437 residues: UPF0597 protein Shal_0864 (437 aa).

This sequence belongs to the UPF0597 family.

In Shewanella halifaxensis (strain HAW-EB4), this protein is UPF0597 protein Shal_0864.